The sequence spans 338 residues: Phenylalanine--tRNA ligase alpha subunit (338 aa).

Position 253 (Glu253) interacts with Mg(2+).

Belongs to the class-II aminoacyl-tRNA synthetase family. Phe-tRNA synthetase alpha subunit type 1 subfamily. As to quaternary structure, tetramer of two alpha and two beta subunits. Requires Mg(2+) as cofactor.

Its subcellular location is the cytoplasm. The enzyme catalyses tRNA(Phe) + L-phenylalanine + ATP = L-phenylalanyl-tRNA(Phe) + AMP + diphosphate + H(+). The chain is Phenylalanine--tRNA ligase alpha subunit from Pelobacter propionicus (strain DSM 2379 / NBRC 103807 / OttBd1).